A 360-amino-acid polypeptide reads, in one-letter code: Peptide chain release factor 1 (360 aa).

At Q237 the chain carries N5-methylglutamine.

This sequence belongs to the prokaryotic/mitochondrial release factor family. Methylated by PrmC. Methylation increases the termination efficiency of RF1.

The protein localises to the cytoplasm. Its function is as follows. Peptide chain release factor 1 directs the termination of translation in response to the peptide chain termination codons UAG and UAA. The chain is Peptide chain release factor 1 from Pseudomonas fluorescens (strain SBW25).